A 502-amino-acid chain; its full sequence is ATP synthase subunit alpha (502 aa).

Residue G169 to T176 participates in ATP binding.

It belongs to the ATPase alpha/beta chains family. In terms of assembly, F-type ATPases have 2 components, CF(1) - the catalytic core - and CF(0) - the membrane proton channel. CF(1) has five subunits: alpha(3), beta(3), gamma(1), delta(1), epsilon(1). CF(0) has three main subunits: a(1), b(2) and c(9-12). The alpha and beta chains form an alternating ring which encloses part of the gamma chain. CF(1) is attached to CF(0) by a central stalk formed by the gamma and epsilon chains, while a peripheral stalk is formed by the delta and b chains.

The protein localises to the cell membrane. The catalysed reaction is ATP + H2O + 4 H(+)(in) = ADP + phosphate + 5 H(+)(out). Functionally, produces ATP from ADP in the presence of a proton gradient across the membrane. The alpha chain is a regulatory subunit. The sequence is that of ATP synthase subunit alpha from Bacillus velezensis (strain DSM 23117 / BGSC 10A6 / LMG 26770 / FZB42) (Bacillus amyloliquefaciens subsp. plantarum).